Here is a 369-residue protein sequence, read N- to C-terminus: Endophilin-A (369 aa).

Positions 18 to 248 (TEKMGGAEGT…LQEKRAEAES (231 aa)) constitute a BAR domain. A coiled-coil region spans residues 227 to 249 (QCADVLRGLQETLQEKRAEAESR). Over residues 275 to 294 (GTPSHISSSASPLPSPMRSP) the composition is skewed to low complexity. A disordered region spans residues 275-297 (GTPSHISSSASPLPSPMRSPAKS). One can recognise an SH3 domain in the interval 305-364 (QQQPCCQALYDFDPENPGELGFKENDIITLLNRVDDNWYEGAVNGRTGYFPQSYVQVQVP).

This sequence belongs to the endophilin family.

It is found in the cytoplasm. It localises to the membrane. Its function is as follows. Required presynaptically at the neuromuscular junction. Implicated in synaptic vesicle endocytosis. The chain is Endophilin-A from Drosophila virilis (Fruit fly).